The following is a 164-amino-acid chain: Endoribonuclease YbeY (164 aa).

Zn(2+) contacts are provided by His-117, His-121, and His-127.

It belongs to the endoribonuclease YbeY family. Zn(2+) serves as cofactor.

It is found in the cytoplasm. Single strand-specific metallo-endoribonuclease involved in late-stage 70S ribosome quality control and in maturation of the 3' terminus of the 16S rRNA. The chain is Endoribonuclease YbeY from Mycoplasma mycoides subsp. mycoides SC (strain CCUG 32753 / NCTC 10114 / PG1).